We begin with the raw amino-acid sequence, 227 residues long: PKHD-type hydroxylase Bamb_4479 (227 aa).

Positions glutamine 80–serine 179 constitute a Fe2OG dioxygenase domain. Fe cation contacts are provided by histidine 98, aspartate 100, and histidine 160. Arginine 170 is a 2-oxoglutarate binding site.

Fe(2+) is required as a cofactor. The cofactor is L-ascorbate.

The chain is PKHD-type hydroxylase Bamb_4479 from Burkholderia ambifaria (strain ATCC BAA-244 / DSM 16087 / CCUG 44356 / LMG 19182 / AMMD) (Burkholderia cepacia (strain AMMD)).